Reading from the N-terminus, the 426-residue chain is Adenylosuccinate synthetase (426 aa).

Residues 14-20 (GDEGKGK) and 42-44 (GHT) contribute to the GTP site. Aspartate 15 acts as the Proton acceptor in catalysis. 2 residues coordinate Mg(2+): aspartate 15 and glycine 42. Residues 15–18 (DEGK), 40–43 (NAGH), threonine 130, arginine 144, glutamine 224, threonine 239, and arginine 303 contribute to the IMP site. Histidine 43 acts as the Proton donor in catalysis. Substrate is bound at residue 299–305 (TVTKRPR). GTP is bound by residues arginine 305, 331 to 333 (LID), and 413 to 415 (SVG).

The protein belongs to the adenylosuccinate synthetase family. Homodimer. Mg(2+) is required as a cofactor.

It is found in the cytoplasm. It catalyses the reaction IMP + L-aspartate + GTP = N(6)-(1,2-dicarboxyethyl)-AMP + GDP + phosphate + 2 H(+). Its pathway is purine metabolism; AMP biosynthesis via de novo pathway; AMP from IMP: step 1/2. Its function is as follows. Plays an important role in the de novo pathway of purine nucleotide biosynthesis. Catalyzes the first committed step in the biosynthesis of AMP from IMP. The sequence is that of Adenylosuccinate synthetase from Malacoplasma penetrans (strain HF-2) (Mycoplasma penetrans).